The chain runs to 157 residues: ATP synthase subunit b (157 aa).

A helical transmembrane segment spans residues 7-27 (LIAQLVVFFILAWFTMKFVWP).

It belongs to the ATPase B chain family. In terms of assembly, F-type ATPases have 2 components, F(1) - the catalytic core - and F(0) - the membrane proton channel. F(1) has five subunits: alpha(3), beta(3), gamma(1), delta(1), epsilon(1). F(0) has three main subunits: a(1), b(2) and c(10-14). The alpha and beta chains form an alternating ring which encloses part of the gamma chain. F(1) is attached to F(0) by a central stalk formed by the gamma and epsilon chains, while a peripheral stalk is formed by the delta and b chains.

The protein localises to the cell inner membrane. Its function is as follows. F(1)F(0) ATP synthase produces ATP from ADP in the presence of a proton or sodium gradient. F-type ATPases consist of two structural domains, F(1) containing the extramembraneous catalytic core and F(0) containing the membrane proton channel, linked together by a central stalk and a peripheral stalk. During catalysis, ATP synthesis in the catalytic domain of F(1) is coupled via a rotary mechanism of the central stalk subunits to proton translocation. Component of the F(0) channel, it forms part of the peripheral stalk, linking F(1) to F(0). In Azoarcus sp. (strain BH72), this protein is ATP synthase subunit b.